We begin with the raw amino-acid sequence, 507 residues long: Tryptamine 4-monooxygenase (507 aa).

An N-terminal signal peptide occupies residues 1–19 (MIVLLVSLVLAGCIYYANA). Positions 403–425 (PNPSEFRPERYLSSDGKPDPTVR) are disordered. Positions 408–425 (FRPERYLSSDGKPDPTVR) are enriched in basic and acidic residues. Cysteine 439 is a heme binding site.

This sequence belongs to the cytochrome P450 family. The cofactor is heme.

The enzyme catalyses tryptamine + AH2 + O2 = 4-hydroxytryptamine + A + H2O. It participates in secondary metabolite biosynthesis. In terms of biological role, tryptamine 4-monooxygenase; part of the gene cluster that mediates the biosynthesis of psilocybin, a psychotropic tryptamine-derived natural product. The first step in the pathway is the decarboxylation of L-tryptophan to tryptamine by the decarboxylase psiD. PsiD does not decarboxylate phenylalanine, tyrosine, or 5-hydroxy- L -tryptophan (5-HTP). 4-hydroxy-L-tryptophan is accepted as substrate by psiD as well. The cytochrome P450 monooxygenase psiH then converts tryptamine to 4-hydroxytryptamine. The kinase psiK catalyzes the 4-O-phosphorylation step by converting 4-hydroxytryptamine into norbaeocystin. The methyltransferase psiM then catalyzes iterative methyl transfer to the amino group of norbaeocystin to yield psilocybin via a monomethylated intermediate, baeocystin. This is Tryptamine 4-monooxygenase from Psilocybe cyanescens.